The chain runs to 144 residues: Large ribosomal subunit protein uL11 (144 aa).

It belongs to the universal ribosomal protein uL11 family. Part of the ribosomal stalk of the 50S ribosomal subunit. Interacts with L10 and the large rRNA to form the base of the stalk. L10 forms an elongated spine to which L12 dimers bind in a sequential fashion forming a multimeric L10(L12)X complex. One or more lysine residues are methylated.

Functionally, forms part of the ribosomal stalk which helps the ribosome interact with GTP-bound translation factors. In Polaromonas sp. (strain JS666 / ATCC BAA-500), this protein is Large ribosomal subunit protein uL11.